The following is a 492-amino-acid chain: 3-octaprenyl-4-hydroxybenzoate carboxy-lyase (492 aa).

Asn175 provides a ligand contact to Mn(2+). Prenylated FMN is bound by residues 178–180 (IYR), 192–194 (RWL), and 197–198 (RG). Residue Glu241 participates in Mn(2+) binding. The active-site Proton donor is the Asp290.

This sequence belongs to the UbiD family. Homohexamer. Prenylated FMN serves as cofactor. Requires Mn(2+) as cofactor.

Its subcellular location is the cell membrane. The enzyme catalyses a 4-hydroxy-3-(all-trans-polyprenyl)benzoate + H(+) = a 2-(all-trans-polyprenyl)phenol + CO2. Its pathway is cofactor biosynthesis; ubiquinone biosynthesis. Functionally, catalyzes the decarboxylation of 3-octaprenyl-4-hydroxy benzoate to 2-octaprenylphenol, an intermediate step in ubiquinone biosynthesis. The polypeptide is 3-octaprenyl-4-hydroxybenzoate carboxy-lyase (Salmonella typhimurium (strain LT2 / SGSC1412 / ATCC 700720)).